Here is a 249-residue protein sequence, read N- to C-terminus: FMN reductase (NADPH) (249 aa).

It belongs to the flavin oxidoreductase frp family. In terms of assembly, homodimer.

The enzyme catalyses FMNH2 + NADP(+) = FMN + NADPH + 2 H(+). In terms of biological role, reduces FMNH(2) to FMN, with NADPH as reductant. It also reduces nitroaromatic compounds, quinones and azo dyes. This is FMN reductase (NADPH) (nfrA1) from Bacillus subtilis (strain 168).